The following is a 590-amino-acid chain: AT-rich interactive domain-containing protein 5A (590 aa).

The segment at 1–52 (MAAPPAKGNTEQSEEGDLPQLPVSPKPDDEQSRSQSPTQLQDSPEAGGEQEE) is disordered. An interaction with SOX9 region spans residues 1–294 (MAAPPAKGNT…NKDIQDSPQN (294 aa)). At Ser24 the chain carries Phosphoserine. The span at 33–42 (RSQSPTQLQD) shows a compositional bias: polar residues. An ARID domain is found at 50–142 (QEEEQAFLVS…LVLPYVRHLK (93 aa)). Glycyl lysine isopeptide (Lys-Gly) (interchain with G-Cter in ubiquitin) cross-links involve residues Lys80 and Lys89. The tract at residues 141 to 229 (LKGEDDKPLP…SGPSPPLTGA (89 aa)) is disordered. A compositionally biased stretch (basic and acidic residues) spans 160-186 (MAKELRGDDGTTEKLKKAKDSEERRVE). Residues 187 to 210 (QTTPGKTKSDATGQTQLPCQGSSR) are compositionally biased toward polar residues. Ser253 and Ser283 each carry phosphoserine. Disordered stretches follow at residues 275–323 (EGCR…RMEA), 367–402 (GPPGKEEGPTTKESHLVWGGDANHPSAFHKGSTRKR), and 419–443 (VPTERPGAPSPHPSSPGLGSKRGLE). A compositionally biased stretch (basic and acidic residues) spans 367–381 (GPPGKEEGPTTKESH). A phosphoserine mark is found at Ser433 and Ser458.

Interacts with SOX9. Interacts with ESR1. Interacts with RORC. In terms of processing, phosphorylated by MAPK14 on serine residues involving a TLR4 signaling pathway upon lipopolysaccharide (LPS) stimulation leading to its ubiquitination and proteasomal degradation. Post-translationally, ubiquitinated leading to proteasomal degradation; involving WWP1 linked to MAPK14-mediated phosphorylation upon LPS stimulation. As to expression, expressed in T cells (at protein level). Expressed at high levels in cartilage, heart, testis and bone.

It localises to the nucleus. Its function is as follows. DNA-binding protein that may regulate transcription and act as a repressor by binding to AT-rich stretches in the promoter region of target genes. May positively regulate chondrocyte-specific transcription such as of COL2A1 in collaboration with SOX9 and positively regulate histone H3 acetylation at chondrocyte-specific genes. May stimulate early-stage chondrocyte differentiation and inhibit later stage differention. Can repress ESR1-mediated transcriptional activation; proposed to act as corepressor for selective nuclear hormone receptors. As an RNA-binding protein, involved in the regulation of inflammatory response by stabilizing selective inflammation-related mRNAs, such as STAT3 and TBX21. Also stabilizes IL6 mRNA. Binds to stem loop structures located in the 3'UTRs of IL6, STAT3 and TBX21 mRNAs; at least for STAT3 prevents binding of ZC3H12A to the mRNA stem loop structure thus inhibiting its degradation activity. Contributes to elevated IL6 levels possibly implicated in autoimmunity processes. IL6-dependent stabilization of STAT3 mRNA may promote differentiation of naive CD4+ T-cells into T-helper Th17 cells. In CD4+ T-cells may also inhibit RORC-induced Th17 cell differentiation independently of IL6 signaling. Stabilization of TBX21 mRNA contributes to elevated interferon-gamma secretion in Th1 cells possibly implicated in the establishment of septic shock. Stabilizes TNFRSF4/OX40 mRNA by binding to the conserved stem loop structure in its 3'UTR; thereby competing with the mRNA-destabilizing functions of RC3H1 and endoribonuclease ZC3H12A. This is AT-rich interactive domain-containing protein 5A (Arid5a) from Mus musculus (Mouse).